We begin with the raw amino-acid sequence, 313 residues long: tRNA dimethylallyltransferase (313 aa).

Residue 10–17 participates in ATP binding; it reads GPTASGKT. Residue 12–17 participates in substrate binding; the sequence is TASGKT. Interaction with substrate tRNA stretches follow at residues 35 to 38, 159 to 163, and 240 to 245; these read DSAM, QRIQR, and RCVGYR.

Belongs to the IPP transferase family. Monomer. Mg(2+) is required as a cofactor.

It catalyses the reaction adenosine(37) in tRNA + dimethylallyl diphosphate = N(6)-dimethylallyladenosine(37) in tRNA + diphosphate. Catalyzes the transfer of a dimethylallyl group onto the adenine at position 37 in tRNAs that read codons beginning with uridine, leading to the formation of N6-(dimethylallyl)adenosine (i(6)A). This chain is tRNA dimethylallyltransferase, found in Legionella pneumophila subsp. pneumophila (strain Philadelphia 1 / ATCC 33152 / DSM 7513).